Here is a 139-residue protein sequence, read N- to C-terminus: Nucleoside diphosphate kinase (139 aa).

ATP-binding residues include lysine 11, phenylalanine 59, arginine 87, threonine 93, arginine 104, and asparagine 114. Catalysis depends on histidine 117, which acts as the Pros-phosphohistidine intermediate.

The protein belongs to the NDK family. Homotetramer. Mg(2+) serves as cofactor.

The protein localises to the cytoplasm. The catalysed reaction is a 2'-deoxyribonucleoside 5'-diphosphate + ATP = a 2'-deoxyribonucleoside 5'-triphosphate + ADP. It carries out the reaction a ribonucleoside 5'-diphosphate + ATP = a ribonucleoside 5'-triphosphate + ADP. Major role in the synthesis of nucleoside triphosphates other than ATP. The ATP gamma phosphate is transferred to the NDP beta phosphate via a ping-pong mechanism, using a phosphorylated active-site intermediate. The sequence is that of Nucleoside diphosphate kinase from Flavobacterium psychrophilum (strain ATCC 49511 / DSM 21280 / CIP 103535 / JIP02/86).